The following is a 124-amino-acid chain: Large ribosomal subunit protein bL20 (124 aa).

Belongs to the bacterial ribosomal protein bL20 family.

Its function is as follows. Binds directly to 23S ribosomal RNA and is necessary for the in vitro assembly process of the 50S ribosomal subunit. It is not involved in the protein synthesizing functions of that subunit. The sequence is that of Large ribosomal subunit protein bL20 from Ehrlichia chaffeensis (strain ATCC CRL-10679 / Arkansas).